A 341-amino-acid polypeptide reads, in one-letter code: Phenylalanine--tRNA ligase alpha subunit (341 aa).

Glu252 provides a ligand contact to Mg(2+).

The protein belongs to the class-II aminoacyl-tRNA synthetase family. Phe-tRNA synthetase alpha subunit type 1 subfamily. In terms of assembly, tetramer of two alpha and two beta subunits. Mg(2+) is required as a cofactor.

It is found in the cytoplasm. It catalyses the reaction tRNA(Phe) + L-phenylalanine + ATP = L-phenylalanyl-tRNA(Phe) + AMP + diphosphate + H(+). This Malacoplasma penetrans (strain HF-2) (Mycoplasma penetrans) protein is Phenylalanine--tRNA ligase alpha subunit.